Here is a 286-residue protein sequence, read N- to C-terminus: ATP synthase gamma chain (286 aa).

Belongs to the ATPase gamma chain family. In terms of assembly, F-type ATPases have 2 components, CF(1) - the catalytic core - and CF(0) - the membrane proton channel. CF(1) has five subunits: alpha(3), beta(3), gamma(1), delta(1), epsilon(1). CF(0) has three main subunits: a, b and c.

It is found in the cell inner membrane. In terms of biological role, produces ATP from ADP in the presence of a proton gradient across the membrane. The gamma chain is believed to be important in regulating ATPase activity and the flow of protons through the CF(0) complex. The polypeptide is ATP synthase gamma chain (Shewanella sp. (strain MR-4)).